The following is an 88-amino-acid chain: Small ribosomal subunit protein bS20 (88 aa).

This sequence belongs to the bacterial ribosomal protein bS20 family.

In terms of biological role, binds directly to 16S ribosomal RNA. The sequence is that of Small ribosomal subunit protein bS20 from Clostridioides difficile (strain 630) (Peptoclostridium difficile).